The chain runs to 103 residues: Gene 56 protein (103 aa).

In terms of domain architecture, Glutaredoxin spans 9 to 103; the sequence is WDGAHVRTLF…DYYTASETGL (95 aa).

This is Gene 56 protein (56) from Mycobacterium phage L5 (Mycobacteriophage L5).